The primary structure comprises 415 residues: Multidrug resistance protein MdtA (415 aa).

The signal sequence occupies residues 1–21 (MKGSYKSRWVIVIVVVIAAIA). Disordered stretches follow at residues 32-56 (SRSA…GMRA) and 392-415 (EAQS…GARS). A compositionally biased stretch (basic and acidic residues) spans 399–415 (SEEKATSREYAKKGARS).

Belongs to the membrane fusion protein (MFP) (TC 8.A.1) family. In terms of assembly, part of a tripartite efflux system composed of MdtA, MdtB and MdtC.

It localises to the cell inner membrane. Its function is as follows. The MdtABC tripartite complex confers resistance against novobiocin and deoxycholate. The sequence is that of Multidrug resistance protein MdtA from Escherichia coli O7:K1 (strain IAI39 / ExPEC).